Here is a 254-residue protein sequence, read N- to C-terminus: Triosephosphate isomerase (254 aa).

Residue 12–14 (NWK) participates in substrate binding. Catalysis depends on H99, which acts as the Electrophile. Residue E169 is the Proton acceptor of the active site. Substrate contacts are provided by residues G175, S214, and 235-236 (GG).

It belongs to the triosephosphate isomerase family. In terms of assembly, homodimer.

It localises to the cytoplasm. The catalysed reaction is D-glyceraldehyde 3-phosphate = dihydroxyacetone phosphate. It participates in carbohydrate biosynthesis; gluconeogenesis. The protein operates within carbohydrate degradation; glycolysis; D-glyceraldehyde 3-phosphate from glycerone phosphate: step 1/1. Functionally, involved in the gluconeogenesis. Catalyzes stereospecifically the conversion of dihydroxyacetone phosphate (DHAP) to D-glyceraldehyde-3-phosphate (G3P). The sequence is that of Triosephosphate isomerase from Bartonella bacilliformis (strain ATCC 35685 / KC583 / Herrer 020/F12,63).